Consider the following 355-residue polypeptide: Peptide chain release factor 1 (355 aa).

Residue Q233 is modified to N5-methylglutamine.

This sequence belongs to the prokaryotic/mitochondrial release factor family. In terms of processing, methylated by PrmC. Methylation increases the termination efficiency of RF1.

Its subcellular location is the cytoplasm. Functionally, peptide chain release factor 1 directs the termination of translation in response to the peptide chain termination codons UAG and UAA. This Syntrophomonas wolfei subsp. wolfei (strain DSM 2245B / Goettingen) protein is Peptide chain release factor 1.